A 599-amino-acid chain; its full sequence is Beta-(1--&gt;2)glucan export ATP-binding/permease protein NdvA (599 aa).

An ABC transmembrane type-1 domain is found at 21–311; that stretch reads GWILAVANLL…VVNFINNVLM (291 aa). 6 helical membrane-spanning segments follow: residues 22–42, 68–88, 146–166, 168–188, 254–274, and 276–296; these read WILA…PILF, LLGA…LVAL, EHFA…YINW, LAIL…LVVH, VITR…GIYL, and QQGL…TLLI. In terms of domain architecture, ABC transporter spans 345–579; that stretch reads VEFQNVSFSY…GGAFAQLARA (235 aa). 378-385 lines the ATP pocket; it reads GATGAGKS.

This sequence belongs to the ABC transporter superfamily. Beta-(1--&gt;2)glucan exporter (TC 3.A.1.108.1) family. As to quaternary structure, homodimer.

It is found in the cell inner membrane. The catalysed reaction is [(1-&gt;2)-beta-D-glucosyl](n)(in) + ATP + H2O = [(1-&gt;2)-beta-D-glucosyl](n)(out) + ADP + phosphate + H(+). Its function is as follows. Involved in beta-(1--&gt;2)glucan export. Transmembrane domains (TMD) form a pore in the inner membrane and the ATP-binding domain (NBD) is responsible for energy generation. The chain is Beta-(1--&gt;2)glucan export ATP-binding/permease protein NdvA from Rhodopseudomonas palustris (strain ATCC BAA-98 / CGA009).